The chain runs to 167 residues: Leptin (167 aa).

The signal sequence occupies residues M1–A21. Cysteines 117 and 167 form a disulfide.

This sequence belongs to the leptin family.

The protein localises to the secreted. Its function is as follows. Key player in the regulation of energy balance and body weight control. Once released into the circulation, has central and peripheral effects by binding LEPR, found in many tissues, which results in the activation of several major signaling pathways. In the hypothalamus, acts as an appetite-regulating factor that induces a decrease in food intake and an increase in energy consumption by inducing anorexinogenic factors and suppressing orexigenic neuropeptides, also regulates bone mass and secretion of hypothalamo-pituitary-adrenal hormones. In the periphery, increases basal metabolism, influences reproductive function, regulates pancreatic beta-cell function and insulin secretion, is pro-angiogenic for endothelial cell and affects innate and adaptive immunity. In the arcuate nucleus of the hypothalamus, activates by depolarization POMC neurons inducing FOS and SOCS3 expression to release anorexigenic peptides and inhibits by hyperpolarization NPY neurons inducing SOCS3 with a consequent reduction on release of orexigenic peptides. In addition to its known satiety inducing effect, has a modulatory role in nutrient absorption. In the intestine, reduces glucose absorption by enterocytes by activating PKC and leading to a sequential activation of p38, PI3K and ERK signaling pathways which exerts an inhibitory effect on glucose absorption. Acts as a growth factor on certain tissues, through the activation of different signaling pathways increases expression of genes involved in cell cycle regulation such as CCND1, via JAK2-STAT3 pathway, or VEGFA, via MAPK1/3 and PI3K-AKT1 pathways. May also play an apoptotic role via JAK2-STAT3 pathway and up-regulation of BIRC5 expression. Pro-angiogenic, has mitogenic activity on vascular endothelial cells and plays a role in matrix remodeling by regulating the expression of matrix metalloproteinases (MMPs) and tissue inhibitors of metalloproteinases (TIMPs). In innate immunity, modulates the activity and function of neutrophils by increasing chemotaxis and the secretion of oxygen radicals. Increases phagocytosis by macrophages and enhances secretion of pro-inflammatory mediators. Increases cytotoxic ability of NK cells. Plays a pro-inflammatory role, in synergy with IL1B, by inducing NOS2 which promotes the production of IL6, IL8 and Prostaglandin E2, through a signaling pathway that involves JAK2, PI3K, MAP2K1/MEK1 and MAPK14/p38. In adaptive immunity, promotes the switch of memory T-cells towards T helper-1 cell immune responses. Increases CD4(+)CD25(-) T-cell proliferation and reduces autophagy during TCR (T-cell receptor) stimulation, through MTOR signaling pathway activation and BCL2 up-regulation. In Halichoerus grypus (Gray seal), this protein is Leptin (LEP).